The sequence spans 420 residues: MTLLALGINHKTAPVALREKVSFSPDTMGDALNNLLQQPAVRGGVVLSTCNRTELYLSLEDKENSHEQLISWLCQYHQIEPHELKNSVYWHQDNQAVSHLMRVASGLDSLVLGEPQILGQVKKAFADSQNYHSLSSELERLFQKSFSVAKRVRTETQIGANAVSVAFAACTLARQIFESLSSLTILLVGAGETIELVARHLREHQVKKIIIANRTKERAQRLANEVDAEVITLSDIDESLSQADIVISSTASPLPIIGKGMVERALKKRRNQPMLLVDIAVPRDIEQDIEKLSNVYLYSVDDLEAIIQHNREQRQAAAIEAEHIVQQESGQFMDWLRAQGAVGAIREYRDSAEMLRAEMAEKAIALIQNGADAEKVIQQLSHQLMNRLIHTPTKSLQQAASDGDIERLNLLRESLGITHN.

Substrate-binding positions include 49–52 (TCNR), S109, 114–116 (EPQ), and Q120. C50 (nucleophile) is an active-site residue. 189-194 (GAGETI) contacts NADP(+).

Belongs to the glutamyl-tRNA reductase family. Homodimer.

The enzyme catalyses (S)-4-amino-5-oxopentanoate + tRNA(Glu) + NADP(+) = L-glutamyl-tRNA(Glu) + NADPH + H(+). The protein operates within porphyrin-containing compound metabolism; protoporphyrin-IX biosynthesis; 5-aminolevulinate from L-glutamyl-tRNA(Glu): step 1/2. Its function is as follows. Catalyzes the NADPH-dependent reduction of glutamyl-tRNA(Glu) to glutamate 1-semialdehyde (GSA). This is Glutamyl-tRNA reductase from Proteus mirabilis (strain HI4320).